A 527-amino-acid polypeptide reads, in one-letter code: Peptide chain release factor 3 (527 aa).

The tr-type G domain maps to 9–277 (AKRRTFAIIS…AVVDWAPRPL (269 aa)). GTP contacts are provided by residues 18–25 (SHPDAGKT), 86–90 (DTPGH), and 140–143 (NKLD).

It belongs to the TRAFAC class translation factor GTPase superfamily. Classic translation factor GTPase family. PrfC subfamily.

The protein resides in the cytoplasm. Increases the formation of ribosomal termination complexes and stimulates activities of RF-1 and RF-2. It binds guanine nucleotides and has strong preference for UGA stop codons. It may interact directly with the ribosome. The stimulation of RF-1 and RF-2 is significantly reduced by GTP and GDP, but not by GMP. In Pseudomonas fluorescens (strain Pf0-1), this protein is Peptide chain release factor 3.